The primary structure comprises 352 residues: MRVAVDVMGGDNAPHVEVEGAVAAAREFGVPVTLVGDAEKVRAELARYDCKGLDIEVWHASEVVGMHDSASDAVRKKKDSSIRIAFELVKGGEAVAVVSAGNSGATMAAGMFVLKRMKGIDRAAIAQLFPTVSGKTLVLDVGGNVDCKPIHLVQFAVMGEVYARFVMGVDNPKVGLLSNGEEASKGNELTRETSALLREKPINYIGYVEGRDIFNGSVDVVVCDGFVGNVALKLSEGLAEAVGKMLKAEIKSSFLSQIGYLLSRKAFNNFKKTVDYAEYGGAPLLGINGVGMICHGGSNPKAIKNAIRFAHEYALKGVNGRMAEKLNESFPGDAREREGAPAPDAGTERVAS.

Over residues 328-339 (ESFPGDAREREG) the composition is skewed to basic and acidic residues. The segment at 328–352 (ESFPGDAREREGAPAPDAGTERVAS) is disordered.

This sequence belongs to the PlsX family. Homodimer. Probably interacts with PlsY.

It localises to the cytoplasm. The catalysed reaction is a fatty acyl-[ACP] + phosphate = an acyl phosphate + holo-[ACP]. It participates in lipid metabolism; phospholipid metabolism. In terms of biological role, catalyzes the reversible formation of acyl-phosphate (acyl-PO(4)) from acyl-[acyl-carrier-protein] (acyl-ACP). This enzyme utilizes acyl-ACP as fatty acyl donor, but not acyl-CoA. The polypeptide is Phosphate acyltransferase (Citrifermentans bemidjiense (strain ATCC BAA-1014 / DSM 16622 / JCM 12645 / Bem) (Geobacter bemidjiensis)).